A 739-amino-acid chain; its full sequence is DNA ligase (739 aa).

NAD(+) contacts are provided by residues 34 to 38 (DADYD), 83 to 84 (SL), and Glu-117. Catalysis depends on Lys-119, which acts as the N6-AMP-lysine intermediate. Arg-140, Glu-175, Lys-291, and Lys-315 together coordinate NAD(+). Residues Cys-420, Cys-423, Cys-438, and Cys-444 each coordinate Zn(2+). Positions 660–739 (ADDSPVAGKT…DGWLDLIGQA (80 aa)) constitute a BRCT domain.

It belongs to the NAD-dependent DNA ligase family. LigA subfamily. Mg(2+) is required as a cofactor. It depends on Mn(2+) as a cofactor.

It catalyses the reaction NAD(+) + (deoxyribonucleotide)n-3'-hydroxyl + 5'-phospho-(deoxyribonucleotide)m = (deoxyribonucleotide)n+m + AMP + beta-nicotinamide D-nucleotide.. Functionally, DNA ligase that catalyzes the formation of phosphodiester linkages between 5'-phosphoryl and 3'-hydroxyl groups in double-stranded DNA using NAD as a coenzyme and as the energy source for the reaction. It is essential for DNA replication and repair of damaged DNA. The sequence is that of DNA ligase from Ruegeria sp. (strain TM1040) (Silicibacter sp.).